A 460-amino-acid polypeptide reads, in one-letter code: tRNA modification GTPase MnmE (460 aa).

(6S)-5-formyl-5,6,7,8-tetrahydrofolate-binding residues include R29, E91, and K132. In terms of domain architecture, TrmE-type G spans 227–383; the sequence is GISIALIGKT…LIDTIIKKCG (157 aa). N237 serves as a coordination point for K(+). GTP contacts are provided by residues 237 to 242, 256 to 262, and 281 to 284; these read NVGKSS, TNIPGTT, and DTAG. Position 241 (S241) interacts with Mg(2+). T256, I258, and T261 together coordinate K(+). Residue T262 coordinates Mg(2+). (6S)-5-formyl-5,6,7,8-tetrahydrofolate is bound at residue K460.

This sequence belongs to the TRAFAC class TrmE-Era-EngA-EngB-Septin-like GTPase superfamily. TrmE GTPase family. As to quaternary structure, homodimer. Heterotetramer of two MnmE and two MnmG subunits. Requires K(+) as cofactor.

It is found in the cytoplasm. Functionally, exhibits a very high intrinsic GTPase hydrolysis rate. Involved in the addition of a carboxymethylaminomethyl (cmnm) group at the wobble position (U34) of certain tRNAs, forming tRNA-cmnm(5)s(2)U34. In Prochlorococcus marinus (strain MIT 9301), this protein is tRNA modification GTPase MnmE.